The following is a 430-amino-acid chain: Glutamate-1-semialdehyde 2,1-aminomutase (430 aa).

Lys265 bears the N6-(pyridoxal phosphate)lysine mark.

This sequence belongs to the class-III pyridoxal-phosphate-dependent aminotransferase family. HemL subfamily. In terms of assembly, homodimer. It depends on pyridoxal 5'-phosphate as a cofactor.

The protein resides in the cytoplasm. It carries out the reaction (S)-4-amino-5-oxopentanoate = 5-aminolevulinate. Its pathway is porphyrin-containing compound metabolism; protoporphyrin-IX biosynthesis; 5-aminolevulinate from L-glutamyl-tRNA(Glu): step 2/2. This is Glutamate-1-semialdehyde 2,1-aminomutase from Shewanella sp. (strain MR-7).